The chain runs to 373 residues: MQKDSLPTLSPAVPPYVMLGLTVAYTIFYCLLFVFVYVQLWLVLRYRHKRFSYQTVFLFLCLLWAALRALLFSFYFKNCVTANTLGPFCFWLLYCFPVCLQFFTLSLMNLYFAQVIFKAKSKYSPELQKYRLPLYLLFLSISLLFLLVNLTCALLVKINRANTETVVLVRVTVNDSLFVLCAVSLSLCLYRIAKMSLANIYLEAKGTSVCQVTLIGVTVVLLYSSRACYNLVVLALTKIKSINSFDYDWYNVSDQADLKSTLGDAGYVVFGVILFVWELLPTSLVVYFFRVRKPTLDRSASVIPGHMFSSRAYFFDNPRRYDSDDDLAWSIIPQNIQASFTSDSYDWSCRNNSFTAYTEAEESHLAPEELNPY.

Over 1 to 15 (MQKDSLPTLSPAVPP) the chain is Lumenal. Residues 16 to 36 (YVMLGLTVAYTIFYCLLFVFV) form a helical membrane-spanning segment. Over 37 to 55 (YVQLWLVLRYRHKRFSYQT) the chain is Cytoplasmic. Residues 56–76 (VFLFLCLLWAALRALLFSFYF) form a helical membrane-spanning segment. The Lumenal portion of the chain corresponds to 77–84 (KNCVTANT). A helical transmembrane segment spans residues 85 to 105 (LGPFCFWLLYCFPVCLQFFTL). The Cytoplasmic segment spans residues 106–135 (SLMNLYFAQVIFKAKSKYSPELQKYRLPLY). A helical transmembrane segment spans residues 136 to 156 (LLFLSISLLFLLVNLTCALLV). The Lumenal portion of the chain corresponds to 157-176 (KINRANTETVVLVRVTVNDS). Residues 177-197 (LFVLCAVSLSLCLYRIAKMSL) traverse the membrane as a helical segment. The Cytoplasmic portion of the chain corresponds to 198–213 (ANIYLEAKGTSVCQVT). Residues 214–234 (LIGVTVVLLYSSRACYNLVVL) traverse the membrane as a helical segment. The Lumenal portion of the chain corresponds to 235-268 (ALTKIKSINSFDYDWYNVSDQADLKSTLGDAGYV). Residues 269–289 (VFGVILFVWELLPTSLVVYFF) traverse the membrane as a helical segment. The Cytoplasmic segment spans residues 290-373 (RVRKPTLDRS…HLAPEELNPY (84 aa)).

Belongs to the GPR137 family.

The protein localises to the lysosome membrane. Lysosomal integral membrane protein that regulates the localization and activity of mTORC1, a signaling complex promoting cell growth in response to growth factors, energy levels, and amino acids. Interacts with Rag GTPases and increases the lysosomial localization and activity of Rag GTPases and thereby regulates mTORC1 translocation and activity in lysosome. Also acts as a negative regulator of osteoclast activity. May be involved in interleukin-4-induced M2 macrophage polarization. Functionally, also acts as a negative regulator of osteoclast activity. May be involved in interleukin-4-induced M2 macrophage polarization. The protein is G protein-coupled receptor 137Ba of Danio rerio (Zebrafish).